The following is a 480-amino-acid chain: Immune evasion protein OPG047 (480 aa).

In terms of domain architecture, BTB spans C10–S90. A BACK domain is found at C125 to N223. Kelch repeat units lie at residues V273–N319, K320–N363, I365–R408, L410–N447, and K448–K480.

Belongs to the orthopoxvirus OPG047 family.

Its function is as follows. Might have a role in the suppression of host immune response. This chain is Immune evasion protein OPG047 (OPG047), found in Vaccinia virus (strain Western Reserve) (VACV).